A 178-amino-acid chain; its full sequence is Large ribosomal subunit protein uL5 (178 aa).

It belongs to the universal ribosomal protein uL5 family. Part of the 50S ribosomal subunit; part of the 5S rRNA/L5/L18/L25 subcomplex. Contacts the 5S rRNA and the P site tRNA. Forms a bridge to the 30S subunit in the 70S ribosome.

Functionally, this is one of the proteins that bind and probably mediate the attachment of the 5S RNA into the large ribosomal subunit, where it forms part of the central protuberance. In the 70S ribosome it contacts protein S13 of the 30S subunit (bridge B1b), connecting the 2 subunits; this bridge is implicated in subunit movement. Contacts the P site tRNA; the 5S rRNA and some of its associated proteins might help stabilize positioning of ribosome-bound tRNAs. In Psychrobacter cryohalolentis (strain ATCC BAA-1226 / DSM 17306 / VKM B-2378 / K5), this protein is Large ribosomal subunit protein uL5.